Here is a 318-residue protein sequence, read N- to C-terminus: uncharacterized protein (318 aa).

This is an uncharacterized protein from Autographa californica nuclear polyhedrosis virus (AcMNPV).